Consider the following 447-residue polypeptide: Phosphatidylinositol N-acetylglucosaminyltransferase subunit A (447 aa).

Topologically, residues 1 to 387 (MAEPPKLRVL…NRSLLERLMR (387 aa)) are cytoplasmic. A helical transmembrane segment spans residues 388 to 408 (FLSCGAWAGKLFCMVMILDYL). Over 409–447 (LWRLLQLLQPDEDIEEAPDICLCHHRGVEVSEGLRKKIK) the chain is Lumenal.

The protein belongs to the glycosyltransferase group 1 family. Glycosyltransferase 4 subfamily. In terms of tissue distribution, expressed in roots, stems, leaves, flowers and pollen grains.

It localises to the endoplasmic reticulum membrane. The catalysed reaction is a 1,2-diacyl-sn-glycero-3-phospho-(1D-myo-inositol) + UDP-N-acetyl-alpha-D-glucosamine = a 6-(N-acetyl-alpha-D-glucosaminyl)-1-(1,2-diacyl-sn-glycero-3-phospho)-1D-myo-inositol + UDP + H(+). The protein operates within glycolipid biosynthesis; glycosylphosphatidylinositol-anchor biosynthesis. Functionally, necessary for the synthesis of N-acetylglucosaminyl-phosphatidylinositol, the very early intermediate in GPI-anchor biosynthesis. Required for pollen germination and pollen tube growth. The sequence is that of Phosphatidylinositol N-acetylglucosaminyltransferase subunit A from Arabidopsis thaliana (Mouse-ear cress).